We begin with the raw amino-acid sequence, 340 residues long: DNA-directed RNA polymerase subunit alpha (340 aa).

Residues 1-236 (MLSLSKNWNT…EQLQLFISFE (236 aa)) form an alpha N-terminal domain (alpha-NTD) region. The segment at 246–340 (TDALPFSPYL…LSNRYEDSYN (95 aa)) is alpha C-terminal domain (alpha-CTD).

It belongs to the RNA polymerase alpha chain family. In terms of assembly, homodimer. The RNAP catalytic core consists of 2 alpha, 1 beta, 1 beta' and 1 omega subunit. When a sigma factor is associated with the core the holoenzyme is formed, which can initiate transcription.

The enzyme catalyses RNA(n) + a ribonucleoside 5'-triphosphate = RNA(n+1) + diphosphate. Its function is as follows. DNA-dependent RNA polymerase catalyzes the transcription of DNA into RNA using the four ribonucleoside triphosphates as substrates. The sequence is that of DNA-directed RNA polymerase subunit alpha from Rickettsia felis (strain ATCC VR-1525 / URRWXCal2) (Rickettsia azadi).